The primary structure comprises 373 residues: Centrosomal protein of 41 kDa (373 aa).

Residues 91-137 are disordered; that stretch reads LEDNDSATSEADAEIAAKTNGKGSPEEQSPSPVQFINSTGAGDSSRS. 2 positions are modified to phosphoserine: Ser-96 and Ser-99. Thr-109 bears the Phosphothreonine mark. Residues Ser-114 and Ser-121 each carry the phosphoserine modification. Over residues 116–137 the composition is skewed to polar residues; it reads EEQSPSPVQFINSTGAGDSSRS. The Rhodanese domain maps to 169–266; the sequence is PDCPFLLLDV…LAQKFPEGLV (98 aa). Residues 317–373 are disordered; sequence DQGPADNPSRLNQNNSAGKDSKVAACRGGQNLPTSCPASHSSPRTLTSGHLQGKPWK. The span at 325–334 shows a compositional bias: polar residues; the sequence is SRLNQNNSAG. Arg-343 bears the Omega-N-methylarginine mark. A compositionally biased stretch (polar residues) spans 347-366; it reads NLPTSCPASHSSPRTLTSGH.

Belongs to the CEP41 family. In terms of assembly, found in a complex with TTLL6.

The protein resides in the cytoplasm. It is found in the cytoskeleton. The protein localises to the microtubule organizing center. Its subcellular location is the centrosome. It localises to the cell projection. The protein resides in the cilium. It is found in the cilium basal body. Required during ciliogenesis for tubulin glutamylation in cilium. Probably acts by participating in the transport of TTLL6, a tubulin polyglutamylase, between the basal body and the cilium. This is Centrosomal protein of 41 kDa (Cep41) from Mus musculus (Mouse).